The primary structure comprises 389 residues: Alanine racemase (389 aa).

Lys-48 (proton acceptor; specific for D-alanine) is an active-site residue. At Lys-48 the chain carries N6-(pyridoxal phosphate)lysine. Arg-144 contributes to the substrate binding site. Catalysis depends on Tyr-281, which acts as the Proton acceptor; specific for L-alanine. Residue Met-329 coordinates substrate.

It belongs to the alanine racemase family. Pyridoxal 5'-phosphate is required as a cofactor.

It carries out the reaction L-alanine = D-alanine. Its pathway is amino-acid biosynthesis; D-alanine biosynthesis; D-alanine from L-alanine: step 1/1. Functionally, catalyzes the interconversion of L-alanine and D-alanine. May also act on other amino acids. This is Alanine racemase (alr) from Leptospira interrogans serogroup Icterohaemorrhagiae serovar Lai (strain 56601).